The chain runs to 435 residues: F-box only protein 9 (435 aa).

Residues 1 to 25 form a disordered region; the sequence is MAEAEEDCHSDAVRVGDEGHESPAE. Over residues 7 to 25 the composition is skewed to basic and acidic residues; it reads DCHSDAVRVGDEGHESPAE. The stretch at 82–115 is one TPR repeat; that stretch reads ARELFLKAVEEEQNGALYEAIKFYRRAMQLVPDI. At Ser-124 the chain carries Phosphoserine. The F-box domain occupies 173 to 224; it reads QTHISVLPMEVLMYIFRWVVSSDLDLRSLEQLSLVCRGFYICARDPEIWRLA.

Part of the SCF (SKP1-CUL1-F-box) E3 ubiquitin-protein ligase complex SCF(FBXO9) composed of CUL1, SKP1, RBX1 and FBXO9. Interacts with TTI1 and TELO2; when TTI1 and TELO2 are phosphorylated by CK2.

The protein localises to the cytoplasm. It participates in protein modification; protein ubiquitination. In terms of biological role, substrate recognition component of a SCF (SKP1-CUL1-F-box protein) E3 ubiquitin-protein ligase complex which mediates the ubiquitination and subsequent proteasomal degradation of target proteins and plays a role in several biological processes such as cell cycle, cell proliferation, or maintenance of chromosome stability. Ubiquitinates mTORC1-bound TTI1 and TELO2 when they are phosphorylated by CK2 following growth factor deprivation, leading to their degradation. In contrast, does not mediate ubiquitination of TTI1 and TELO2 when they are part of the mTORC2 complex. As a consequence, mTORC1 is inactivated to restrain cell growth and protein translation, while mTORC2 is the activated due to the relief of feedback inhibition by mTORC1. Plays a role in maintaining epithelial cell survival by regulating the turn-over of chromatin modulator PRMT4 through ubiquitination and degradation by the proteasomal pathway. Also regulates PPARgamma stability by facilitating PPARgamma/PPARG ubiquitination and thereby plays a role in adipocyte differentiation. The protein is F-box only protein 9 (Fbxo9) of Rattus norvegicus (Rat).